Here is a 1151-residue protein sequence, read N- to C-terminus: Protein kinase C-like 1 (1151 aa).

REM-1 domains lie at Met-1–Gln-67 and Lys-106–Asp-183. A disordered region spans residues Lys-64–Phe-88. Residues Gln-190–Asn-309 enclose the C2 domain. At Ser-226 the chain carries Phosphoserine. The interval Gly-306 to Gly-331 is disordered. 2 consecutive Phorbol-ester/DAG-type zinc fingers follow at residues Gly-414–Cys-461 and Pro-481–Cys-531. 2 disordered regions span residues Gln-546–Lys-620 and Ala-649–Arg-669. Residues Pro-560–Ser-577 show a composition bias toward polar residues. Residues Val-605–Lys-620 are compositionally biased toward basic and acidic residues. The residue at position 761 (Ser-761) is a Phosphoserine. Residues Leu-782–Arg-816 form a disordered region. Over residues Thr-792–Ser-806 the composition is skewed to low complexity. Over residues Ala-807–Arg-816 the composition is skewed to basic residues. The Protein kinase domain occupies Phe-824–Phe-1083. ATP contacts are provided by residues Leu-830 to Val-838 and Lys-853. The active-site Proton acceptor is the Asp-949. The AGC-kinase C-terminal domain maps to Arg-1084 to Leu-1151.

The protein belongs to the protein kinase superfamily. AGC Ser/Thr protein kinase family. PKC subfamily.

The enzyme catalyses L-seryl-[protein] + ATP = O-phospho-L-seryl-[protein] + ADP + H(+). The catalysed reaction is L-threonyl-[protein] + ATP = O-phospho-L-threonyl-[protein] + ADP + H(+). In terms of biological role, required for cell growth and for the G2-&gt;M transition of the cell division cycle. Mediates a protein kinase cascade; it activates BCK1 which itself activates MKK1/MKK2. The sequence is that of Protein kinase C-like 1 (PKC1) from Saccharomyces cerevisiae (strain ATCC 204508 / S288c) (Baker's yeast).